A 233-amino-acid polypeptide reads, in one-letter code: Small ribosomal subunit protein uS3 (233 aa).

The region spanning 39–107 (VRQFLTKELS…PAQINIAEVR (69 aa)) is the KH type-2 domain.

This sequence belongs to the universal ribosomal protein uS3 family. In terms of assembly, part of the 30S ribosomal subunit. Forms a tight complex with proteins S10 and S14.

Functionally, binds the lower part of the 30S subunit head. Binds mRNA in the 70S ribosome, positioning it for translation. In Vibrio vulnificus (strain CMCP6), this protein is Small ribosomal subunit protein uS3.